The chain runs to 36 residues: Photosystem II reaction center protein M (36 aa).

The helical transmembrane segment at Ile-5–Leu-25 threads the bilayer.

Belongs to the PsbM family. In terms of assembly, PSII is composed of 1 copy each of membrane proteins PsbA, PsbB, PsbC, PsbD, PsbE, PsbF, PsbH, PsbI, PsbJ, PsbK, PsbL, PsbM, PsbT, PsbX, PsbY, PsbZ, Psb30/Ycf12, at least 3 peripheral proteins of the oxygen-evolving complex and a large number of cofactors. It forms dimeric complexes.

It localises to the plastid. The protein resides in the chloroplast thylakoid membrane. Its function is as follows. One of the components of the core complex of photosystem II (PSII). PSII is a light-driven water:plastoquinone oxidoreductase that uses light energy to abstract electrons from H(2)O, generating O(2) and a proton gradient subsequently used for ATP formation. It consists of a core antenna complex that captures photons, and an electron transfer chain that converts photonic excitation into a charge separation. This subunit is found at the monomer-monomer interface. In Chlorokybus atmophyticus (Soil alga), this protein is Photosystem II reaction center protein M.